The sequence spans 1755 residues: Transposon Ty1-ER1 Gag-Pol polyprotein (1755 aa).

Composition is skewed to polar residues over residues 1-23 (MESQQLSQHSPISHGSACASVTS), 48-60 (TKANSQQTTTPAS), and 127-152 (QSQFPQYPSSVGTPLSTPSPESGNTF). Disordered stretches follow at residues 1–93 (MESQ…MMTQ), 126–174 (PQSQ…PPPM), and 352–421 (GSRN…SKST). Residues 153–165 (TDSSSADSDMTST) are compositionally biased toward low complexity. The interval 299-401 (NNGIHINNKV…NSKSKTARAH (103 aa)) is RNA-binding. Positions 402–418 (NVSTSNNSPSTDNDSIS) are enriched in low complexity. The residue at position 416 (Ser416) is a Phosphoserine. The active-site For protease activity; shared with dimeric partner is the Asp461. The segment at 583–640 (NVHTSESTRKYPYPFIHRMLAHANAQTIRYSLKNNTITYFNESDVDWSSAIDYQCPDC) is integrase-type zinc finger-like. The 176-residue stretch at 660–835 (NSYEPFQYLH…AGLDISTLLP (176 aa)) folds into the Integrase catalytic domain. Residues Asp671 and Asp736 each contribute to the Mg(2+) site. Disordered regions lie at residues 956–1087 (SKAV…ETEK), 1092–1111 (RSPSIDASPPENNSSHNIVP), and 1130–1171 (DLPL…DSNA). A compositionally biased stretch (low complexity) spans 960 to 969 (SPTDSTPPST). Positions 1005–1015 (STPQISNIEST) are enriched in polar residues. The segment covering 1038–1053 (ESSHASKSKDFRHSDS) has biased composition (basic and acidic residues). Composition is skewed to polar residues over residues 1054–1082 (YSENETNHTNVPISSTGGTNNKTVPQISD) and 1101–1111 (PENNSSHNIVP). The short motif at 1178-1212 (KKRSLEDNETEIKVSRDTWNTKNMRSLEPPRSKKR) is the Bipartite nuclear localization signal element. The Reverse transcriptase Ty1/copia-type domain occupies 1338 to 1476 (NNYYITQLDI…DILGLEIKYQ (139 aa)). Mg(2+) is bound by residues Asp1346, Asp1427, Asp1428, Asp1610, Glu1652, and Asp1685. Positions 1610-1752 (DASYGNQPYY…IKTFKLLTNK (143 aa)) constitute an RNase H Ty1/copia-type domain.

As to quaternary structure, the capsid protein forms a homotrimer, from which the VLPs are assembled. The protease is a homodimer, whose active site consists of two apposed aspartic acid residues. Post-translationally, initially, virus-like particles (VLPs) are composed of the structural unprocessed proteins Gag and Gag-Pol, and also contain the host initiator methionine tRNA (tRNA(i)-Met) which serves as a primer for minus-strand DNA synthesis, and a dimer of genomic Ty RNA. Processing of the polyproteins occurs within the particle and proceeds by an ordered pathway, called maturation. First, the protease (PR) is released by autocatalytic cleavage of the Gag-Pol polyprotein yielding capsid protein p45 and a Pol-p154 precursor protein. This cleavage is a prerequisite for subsequent processing of Pol-p154 at the remaining sites to release the mature structural and catalytic proteins. Maturation takes place prior to the RT reaction and is required to produce transposition-competent VLPs.

Its subcellular location is the cytoplasm. The protein localises to the nucleus. It carries out the reaction DNA(n) + a 2'-deoxyribonucleoside 5'-triphosphate = DNA(n+1) + diphosphate. It catalyses the reaction Endonucleolytic cleavage to 5'-phosphomonoester.. Functionally, capsid protein (CA) is the structural component of the virus-like particle (VLP), forming the shell that encapsulates the retrotransposons dimeric RNA genome. The particles are assembled from trimer-clustered units and there are holes in the capsid shells that allow for the diffusion of macromolecules. CA also has nucleocapsid-like chaperone activity, promoting primer tRNA(i)-Met annealing to the multipartite primer-binding site (PBS), dimerization of Ty1 RNA and initiation of reverse transcription. The aspartyl protease (PR) mediates the proteolytic cleavages of the Gag and Gag-Pol polyproteins after assembly of the VLP. In terms of biological role, reverse transcriptase/ribonuclease H (RT) is a multifunctional enzyme that catalyzes the conversion of the retro-elements RNA genome into dsDNA within the VLP. The enzyme displays a DNA polymerase activity that can copy either DNA or RNA templates, and a ribonuclease H (RNase H) activity that cleaves the RNA strand of RNA-DNA heteroduplexes during plus-strand synthesis and hydrolyzes RNA primers. The conversion leads to a linear dsDNA copy of the retrotransposon that includes long terminal repeats (LTRs) at both ends. Its function is as follows. Integrase (IN) targets the VLP to the nucleus, where a subparticle preintegration complex (PIC) containing at least integrase and the newly synthesized dsDNA copy of the retrotransposon must transit the nuclear membrane. Once in the nucleus, integrase performs the integration of the dsDNA into the host genome. This is Transposon Ty1-ER1 Gag-Pol polyprotein (TY1B-ER1) from Saccharomyces cerevisiae (strain ATCC 204508 / S288c) (Baker's yeast).